The primary structure comprises 266 residues: Biotin--[acetyl-CoA-carboxylase] ligase (266 aa).

One can recognise a BPL/LPL catalytic domain in the interval 14–202 (RSLRDQLIGA…ELEARIIQWR (189 aa)). Residues 38–39 (ST), Gln63, Arg67, and Lys138 contribute to the biotin site.

It belongs to the biotin--protein ligase family. As to quaternary structure, monomer in solution. Forms dimers under specific crystallization conditions.

It catalyses the reaction biotin + L-lysyl-[protein] + ATP = N(6)-biotinyl-L-lysyl-[protein] + AMP + diphosphate + H(+). It carries out the reaction biotin + ATP + H(+) = biotinyl-5'-AMP + diphosphate. The enzyme catalyses biotinyl-5'-AMP + L-lysyl-[protein] = N(6)-biotinyl-L-lysyl-[protein] + AMP + 2 H(+). Binding of biotin and ATP significantly increases the thermal stability of BirA and leads to the formation of a high affinity holoenzyme complex. Its function is as follows. Catalyzes the transfer of biotin onto a conserved lysine residue of the biotin carboxyl carrier protein (BCCP) domain of acetyl-CoA carboxylase and converts it to active holo-BCCP. Forms an acyl-adenylate intermediate. Cannot use GTP or desthiobiotin. The protein is Biotin--[acetyl-CoA-carboxylase] ligase of Mycobacterium tuberculosis (strain ATCC 25618 / H37Rv).